Consider the following 299-residue polypeptide: Protoheme IX farnesyltransferase (299 aa).

The next 9 membrane-spanning stretches (helical) occupy residues 17–37 (VVALILLTAEVGMFLAVPAPY), 41–61 (GLLVLSASIGISMAAASAAVF), 91–111 (ALMWGVFLGLVGLGILQLFVN), 113–133 (ITMVLTFVSLIGYAIIYTLYL), 141–161 (IVIGGAAGAAPPVLGWTAVSG), 168–188 (ACLLFLIVFIWTPPHFWALAI), 207–227 (GLAYTRTQILLYTVLLLLVSL), 228–248 (LPYLASMSGLIYLVVAIALGI), and 266–286 (IAWCTFVYSINYLMLLFVTLL).

The protein belongs to the UbiA prenyltransferase family. Protoheme IX farnesyltransferase subfamily.

The protein resides in the cell inner membrane. It carries out the reaction heme b + (2E,6E)-farnesyl diphosphate + H2O = Fe(II)-heme o + diphosphate. The protein operates within porphyrin-containing compound metabolism; heme O biosynthesis; heme O from protoheme: step 1/1. In terms of biological role, converts heme B (protoheme IX) to heme O by substitution of the vinyl group on carbon 2 of heme B porphyrin ring with a hydroxyethyl farnesyl side group. The chain is Protoheme IX farnesyltransferase from Ruthia magnifica subsp. Calyptogena magnifica.